The following is a 298-amino-acid chain: Protein REVEILLE 8 (298 aa).

The tract at residues 1-44 (MSSSPSRNPTNAEAPPPPPTSTDAVAEGSSKKVRKPYTITKSRE) is disordered. The HTH myb-type domain occupies 38-92 (TITKSRESWTEEEHDKFLEALQLFDRDWKKIEDFVGSKTVIQIRSHAQKYFLKVQ). Positions 65–88 (WKKIEDFVGSKTVIQIRSHAQKYF) form a DNA-binding region, H-T-H motif. Positions 96 to 123 (TLAHVPPPRPKRKAAHPYPQKASKNAQM) are disordered.

The protein resides in the nucleus. In terms of biological role, transcriptional activator of evening element (EE)-containing clock-controlled genes. Forms a negative feedback loop with APRR5. Regulates the pattern of histone H3 acetylation of the TOC1 promoter. RVE4, RVE6 and RVE8 are components of the circadian system acting synergistically to regulate flowering time, redundantly to regulate leaf growth, and antagonistically to regulate hypocotyl elongation; their action seems independent of ZTL and HY5. This Arabidopsis thaliana (Mouse-ear cress) protein is Protein REVEILLE 8.